The sequence spans 167 residues: MGVKRSLQSGGILLSLVANVLMVLSTATNYWTRQQEGHSGLWQECNHGICSSIPCQTTLAVTVACMVLAVGVGVVGMVMGLRIRCDEGESLRGQTTSAFLFLGGLLLLTALIGYTVKNAWKNNVFFSWSYFSGWLALPFSILAGFCFLLADMIMQSTDAISGFPVCL.

Helical transmembrane passes span 7–27 (LQSGGILLSLVANVLMVLSTA), 59–79 (LAVTVACMVLAVGVGVVGMVM), 96–116 (TSAFLFLGGLLLLTALIGYTV), and 134–154 (WLALPFSILAGFCFLLADMIM).

The protein belongs to the PMP-22/EMP/MP20 family.

The protein resides in the membrane. The chain is Claudin domain-containing protein 2 (CLDND2) from Homo sapiens (Human).